We begin with the raw amino-acid sequence, 187 residues long: Large ribosomal subunit protein uL5 (187 aa).

Belongs to the universal ribosomal protein uL5 family. In terms of assembly, part of the 50S ribosomal subunit; part of the 5S rRNA/L5/L18/L25 subcomplex. Contacts the 5S rRNA and the P site tRNA. Forms a bridge to the 30S subunit in the 70S ribosome.

This is one of the proteins that bind and probably mediate the attachment of the 5S RNA into the large ribosomal subunit, where it forms part of the central protuberance. In the 70S ribosome it contacts protein S13 of the 30S subunit (bridge B1b), connecting the 2 subunits; this bridge is implicated in subunit movement. Contacts the P site tRNA; the 5S rRNA and some of its associated proteins might help stabilize positioning of ribosome-bound tRNAs. The sequence is that of Large ribosomal subunit protein uL5 from Mycobacterium bovis (strain BCG / Tokyo 172 / ATCC 35737 / TMC 1019).